We begin with the raw amino-acid sequence, 315 residues long: Spermidine synthase 1 (315 aa).

A PABS domain is found at 25–262; that stretch reads PGWFSEISPL…GMIGFMLCST (238 aa). Gln56 is a binding site for S-adenosyl 3-(methylsulfanyl)propylamine. A putrescine-binding site is contributed by Tyr86. S-adenosyl 3-(methylsulfanyl)propylamine is bound by residues Gln87, Asp111, Glu131, 162 to 163, and Asp181; that span reads DG. The active-site Proton acceptor is Asp181. Putrescine contacts are provided by residues 181 to 184 and Tyr250; that span reads DSSD.

Belongs to the spermidine/spermine synthase family.

The enzyme catalyses S-adenosyl 3-(methylsulfanyl)propylamine + putrescine = S-methyl-5'-thioadenosine + spermidine + H(+). It functions in the pathway amine and polyamine biosynthesis; spermidine biosynthesis; spermidine from putrescine: step 1/1. This chain is Spermidine synthase 1, found in Hyoscyamus niger (Black henbane).